Reading from the N-terminus, the 340-residue chain is Biotin synthase (340 aa).

The Radical SAM core domain maps to 45-272 (NAVQVSTLLS…ASYVRLSAGR (228 aa)). Residues C60, C64, and C67 each contribute to the [4Fe-4S] cluster site. [2Fe-2S] cluster-binding residues include C104, C135, C195, and R267.

It belongs to the radical SAM superfamily. Biotin synthase family. Homodimer. The cofactor is [4Fe-4S] cluster. It depends on [2Fe-2S] cluster as a cofactor.

It catalyses the reaction (4R,5S)-dethiobiotin + (sulfur carrier)-SH + 2 reduced [2Fe-2S]-[ferredoxin] + 2 S-adenosyl-L-methionine = (sulfur carrier)-H + biotin + 2 5'-deoxyadenosine + 2 L-methionine + 2 oxidized [2Fe-2S]-[ferredoxin]. It participates in cofactor biosynthesis; biotin biosynthesis; biotin from 7,8-diaminononanoate: step 2/2. In terms of biological role, catalyzes the conversion of dethiobiotin (DTB) to biotin by the insertion of a sulfur atom into dethiobiotin via a radical-based mechanism. This Thioalkalivibrio sulfidiphilus (strain HL-EbGR7) protein is Biotin synthase.